The sequence spans 270 residues: Imidazole glycerol phosphate synthase subunit HisF (270 aa).

Catalysis depends on residues Asp-11 and Asp-130.

It belongs to the HisA/HisF family. As to quaternary structure, heterodimer of HisH and HisF.

The protein localises to the cytoplasm. It catalyses the reaction 5-[(5-phospho-1-deoxy-D-ribulos-1-ylimino)methylamino]-1-(5-phospho-beta-D-ribosyl)imidazole-4-carboxamide + L-glutamine = D-erythro-1-(imidazol-4-yl)glycerol 3-phosphate + 5-amino-1-(5-phospho-beta-D-ribosyl)imidazole-4-carboxamide + L-glutamate + H(+). Its pathway is amino-acid biosynthesis; L-histidine biosynthesis; L-histidine from 5-phospho-alpha-D-ribose 1-diphosphate: step 5/9. IGPS catalyzes the conversion of PRFAR and glutamine to IGP, AICAR and glutamate. The HisF subunit catalyzes the cyclization activity that produces IGP and AICAR from PRFAR using the ammonia provided by the HisH subunit. This Chloroflexus aggregans (strain MD-66 / DSM 9485) protein is Imidazole glycerol phosphate synthase subunit HisF.